The sequence spans 99 residues: Large ribosomal subunit protein uL23 (99 aa).

This sequence belongs to the universal ribosomal protein uL23 family. Part of the 50S ribosomal subunit. Contacts protein L29, and trigger factor when it is bound to the ribosome.

One of the early assembly proteins it binds 23S rRNA. One of the proteins that surrounds the polypeptide exit tunnel on the outside of the ribosome. Forms the main docking site for trigger factor binding to the ribosome. This chain is Large ribosomal subunit protein uL23, found in Pseudomonas fluorescens (strain SBW25).